Reading from the N-terminus, the 308-residue chain is Malate dehydrogenase (308 aa).

NAD(+)-binding positions include 8–13 and Asp33; that span reads GVGKIG. Positions 82 and 88 each coordinate substrate. Residues Asn95 and 118–120 contribute to the NAD(+) site; that span reads VSN. Substrate is bound by residues Asn120 and Arg148. His172 serves as the catalytic Proton acceptor.

The protein belongs to the LDH/MDH superfamily.

It catalyses the reaction (S)-malate + NAD(+) = oxaloacetate + NADH + H(+). Catalyzes the reversible oxidation of malate to oxaloacetate. This Sulfurisphaera tokodaii (strain DSM 16993 / JCM 10545 / NBRC 100140 / 7) (Sulfolobus tokodaii) protein is Malate dehydrogenase (mdh).